The chain runs to 417 residues: uncharacterized protein (417 aa).

The signal sequence occupies residues 1 to 21 (MPYYWGAILIGGVFLAGCTQN).

This is an uncharacterized protein from Methanocaldococcus jannaschii (strain ATCC 43067 / DSM 2661 / JAL-1 / JCM 10045 / NBRC 100440) (Methanococcus jannaschii).